The chain runs to 275 residues: tRNA pseudouridine synthase A (275 aa).

Catalysis depends on Asp62, which acts as the Nucleophile. Residue Tyr124 participates in substrate binding.

This sequence belongs to the tRNA pseudouridine synthase TruA family. As to quaternary structure, homodimer.

It carries out the reaction uridine(38/39/40) in tRNA = pseudouridine(38/39/40) in tRNA. In terms of biological role, formation of pseudouridine at positions 38, 39 and 40 in the anticodon stem and loop of transfer RNAs. The chain is tRNA pseudouridine synthase A from Herminiimonas arsenicoxydans.